We begin with the raw amino-acid sequence, 288 residues long: UDP-3-O-acyl-N-acetylglucosamine deacetylase (288 aa).

Zn(2+)-binding residues include histidine 79, histidine 236, and aspartate 240. The Proton donor role is filled by histidine 263.

Belongs to the LpxC family. Zn(2+) is required as a cofactor.

The catalysed reaction is a UDP-3-O-[(3R)-3-hydroxyacyl]-N-acetyl-alpha-D-glucosamine + H2O = a UDP-3-O-[(3R)-3-hydroxyacyl]-alpha-D-glucosamine + acetate. The protein operates within glycolipid biosynthesis; lipid IV(A) biosynthesis; lipid IV(A) from (3R)-3-hydroxytetradecanoyl-[acyl-carrier-protein] and UDP-N-acetyl-alpha-D-glucosamine: step 2/6. In terms of biological role, catalyzes the hydrolysis of UDP-3-O-myristoyl-N-acetylglucosamine to form UDP-3-O-myristoylglucosamine and acetate, the committed step in lipid A biosynthesis. In Rickettsia bellii (strain OSU 85-389), this protein is UDP-3-O-acyl-N-acetylglucosamine deacetylase.